The chain runs to 147 residues: Large ribosomal subunit protein uL15 (147 aa).

The span at M1–R20 shows a compositional bias: basic and acidic residues. The tract at residues M1–Q61 is disordered. Over residues R23 to A33 the composition is skewed to gly residues. Residues G34–G47 show a composition bias toward basic residues.

Belongs to the universal ribosomal protein uL15 family. Part of the 50S ribosomal subunit.

Its function is as follows. Binds to the 23S rRNA. The protein is Large ribosomal subunit protein uL15 of Xanthomonas axonopodis pv. citri (strain 306).